Here is a 233-residue protein sequence, read N- to C-terminus: Probable chemoreceptor glutamine deamidase CheD (233 aa).

It belongs to the CheD family.

It catalyses the reaction L-glutaminyl-[protein] + H2O = L-glutamyl-[protein] + NH4(+). In terms of biological role, probably deamidates glutamine residues to glutamate on methyl-accepting chemotaxis receptors (MCPs), playing an important role in chemotaxis. The protein is Probable chemoreceptor glutamine deamidase CheD of Ralstonia nicotianae (strain ATCC BAA-1114 / GMI1000) (Ralstonia solanacearum).